Here is a 47-residue protein sequence, read N- to C-terminus: Exoenzymes regulatory protein AepH (47 aa).

Composition is skewed to basic and acidic residues over residues 1–17 (MGQE…QDGH) and 33–47 (TKKE…DANV). Positions 1–47 (MGQEPKGIESRKIQDGHVRKKVGRQQGLWVRTTKKEKFSRMSRDANV) are disordered.

Functionally, involved in the control of extracellular enzymes production. Stimulates PEL, PEH, CEL, and PRT production. The polypeptide is Exoenzymes regulatory protein AepH (aepH) (Pectobacterium carotovorum subsp. carotovorum (Erwinia carotovora subsp. carotovora)).